Consider the following 447-residue polypeptide: tRNA modification GTPase MnmE (447 aa).

(6S)-5-formyl-5,6,7,8-tetrahydrofolate-binding residues include R24, E81, and K120. One can recognise a TrmE-type G domain in the interval 216–371 (GLNVVIAGKP…LRKELSDIAG (156 aa)). N226 provides a ligand contact to K(+). GTP is bound by residues 226–231 (NAGKSS), 245–251 (TDIAGTT), and 270–273 (DTAG). S230 is a Mg(2+) binding site. K(+) is bound by residues T245, I247, and T250. T251 lines the Mg(2+) pocket. K447 contacts (6S)-5-formyl-5,6,7,8-tetrahydrofolate.

This sequence belongs to the TRAFAC class TrmE-Era-EngA-EngB-Septin-like GTPase superfamily. TrmE GTPase family. Homodimer. Heterotetramer of two MnmE and two MnmG subunits. K(+) is required as a cofactor.

It is found in the cytoplasm. Its function is as follows. Exhibits a very high intrinsic GTPase hydrolysis rate. Involved in the addition of a carboxymethylaminomethyl (cmnm) group at the wobble position (U34) of certain tRNAs, forming tRNA-cmnm(5)s(2)U34. This chain is tRNA modification GTPase MnmE, found in Ruthia magnifica subsp. Calyptogena magnifica.